Reading from the N-terminus, the 229-residue chain is Large ribosomal subunit protein uL1 (229 aa).

The protein belongs to the universal ribosomal protein uL1 family. Part of the 50S ribosomal subunit.

Its function is as follows. Binds directly to 23S rRNA. The L1 stalk is quite mobile in the ribosome, and is involved in E site tRNA release. Functionally, protein L1 is also a translational repressor protein, it controls the translation of the L11 operon by binding to its mRNA. The polypeptide is Large ribosomal subunit protein uL1 (Clostridium acetobutylicum (strain ATCC 824 / DSM 792 / JCM 1419 / IAM 19013 / LMG 5710 / NBRC 13948 / NRRL B-527 / VKM B-1787 / 2291 / W)).